The chain runs to 313 residues: Putative S-adenosyl-L-methionine-dependent methyltransferase MAV_5149 (313 aa).

Residues D135 and 164-165 (DL) contribute to the S-adenosyl-L-methionine site.

This sequence belongs to the UPF0677 family.

Its function is as follows. Exhibits S-adenosyl-L-methionine-dependent methyltransferase activity. The chain is Putative S-adenosyl-L-methionine-dependent methyltransferase MAV_5149 from Mycobacterium avium (strain 104).